The following is a 114-amino-acid chain: Protein lin-52 homolog (114 aa).

Ser26 and Ser51 each carry phosphoserine.

The protein belongs to the lin-52 family. As to quaternary structure, component of the DREAM complex (also named LINC complex) at least composed of E2F4, E2F5, LIN9, LIN37, LIN52, LIN54, MYBL1, MYBL2, RBL1, RBL2, RBBP4, TFDP1 and TFDP2. The complex exists in quiescent cells where it represses cell cycle-dependent genes. It dissociates in S phase when LIN9, LIN37, LIN52 and LIN54 form a subcomplex that binds to MYBL2.

This is Protein lin-52 homolog (LIN52) from Pongo abelii (Sumatran orangutan).